A 421-amino-acid chain; its full sequence is Ankyrin repeat and SOCS box protein 6 (421 aa).

6 ANK repeats span residues 67–97 (EGVS…NLNF), 102–131 (TYYT…DVNR), 136–166 (HESS…DVNA), 170–205 (HGKT…DVKA), 226–255 (GGDK…DPSE), and 260–289 (ESLT…AYNC). Residues 360–415 (ALHFSLRQLESYPPPLKHLCRVAIRLYLQPWPVDVKVKALPLPDRLKWYLLSEHSG) form the SOCS box domain.

Belongs to the ankyrin SOCS box (ASB) family. As to quaternary structure, binds APS. Identified in a complex with ELOB and ELOC. Interacts with CUL5 and RNF7. Interacts with SQSTM1. Post-translationally, ubiquitinated by RNF41; leading to proteasomal degradation.

It localises to the cytoplasm. It participates in protein modification; protein ubiquitination. Probable substrate-recognition component of a SCF-like ECS (Elongin-Cullin-SOCS-box protein) E3 ubiquitin-protein ligase complex which mediates the ubiquitination and subsequent proteasomal degradation of target proteins. May play a role in the regulation of cell proliferation and autophagy by promoting the ubiquitination and degradation of SQSTM1. This Homo sapiens (Human) protein is Ankyrin repeat and SOCS box protein 6 (ASB6).